A 794-amino-acid polypeptide reads, in one-letter code: Signal transducer and activator of transcription 5A (794 aa).

At Tyr90 the chain carries Phosphotyrosine. Phosphoserine is present on Ser128. The region spanning 589–686 (WNDGAILGFV…EVFSKYYTPV (98 aa)) is the SH2 domain. Tyr682 is subject to Phosphotyrosine. Phosphotyrosine; by JAK2 is present on Tyr694. The segment at 771–794 (PMDSLEPSLPPPTGLFTPGRGSLS) is disordered.

Belongs to the transcription factor STAT family. Forms a homodimer or a heterodimer with a related family member. Binds NR3C1. Interacts with NCOA1 and SOCS7. Interacts with ERBB4. Interacts with EBF4. Interacts with CD69. In terms of processing, ISGylated. Post-translationally, tyrosine phosphorylated in response to KITLG/SCF, IL2, IL3, IL7, IL15, CSF2/GMCSF, GH1, PRL, EPO and THPO. Activated KIT promotes phosphorylation on tyrosine residues and subsequent translocation to the nucleus. Tyrosine phosphorylated in response to constitutively activated FGFR1, FGFR2, FGFR3 and FGFR4. Tyrosine phosphorylation is required for DNA-binding activity and dimerization. Serine phosphorylation is also required for maximal transcriptional activity. Tyrosine phosphorylated in response to signaling via activated FLT3; wild-type FLT3 results in much weaker phosphorylation than constitutively activated mutant FLT3. Alternatively, can be phosphorylated by JAK2 at Tyr-694.

Its subcellular location is the cytoplasm. The protein localises to the nucleus. Its function is as follows. Carries out a dual function: signal transduction and activation of transcription. Mediates cellular responses to the cytokine KITLG/SCF and other growth factors. May mediate cellular responses to activated FGFR1, FGFR2, FGFR3 and FGFR4. Binds to the GAS element and activates PRL-induced transcription. Regulates the expression of milk proteins during lactation. The polypeptide is Signal transducer and activator of transcription 5A (STAT5A) (Bos taurus (Bovine)).